The sequence spans 90 residues: Small ribosomal subunit protein bS16 (90 aa).

It belongs to the bacterial ribosomal protein bS16 family.

The protein is Small ribosomal subunit protein bS16 of Lactobacillus acidophilus (strain ATCC 700396 / NCK56 / N2 / NCFM).